Here is a 706-residue protein sequence, read N- to C-terminus: Envelope glycoprotein H (706 aa).

Positions 1–18 (MQLLCVFCLVLLWEVGAA) are cleaved as a signal peptide. The Virion surface segment spans residues 19–682 (SLSEVKLHLD…LYEERAHVVL (664 aa)). N60 carries an N-linked (GlcNAc...) asparagine; by host glycan. An interaction with gL region spans residues 165-229 (DKFQYTGAMT…QSGDYSLVIV (65 aa)). Cysteines 278 and 335 form a disulfide. N-linked (GlcNAc...) asparagine; by host glycosylation is present at N435. 2 disulfide bridges follow: C454-C478 and C534-C587. N-linked (GlcNAc...) asparagine; by host glycosylation is found at N549 and N604. C612 and C615 are oxidised to a cystine. N-linked (GlcNAc...) asparagine; by host glycosylation occurs at N664. The chain crosses the membrane as a helical span at residues 683 to 703 (AIILYFIAFALGIFLVHKIVM). Residues 704–706 (FFL) are Intravirion-facing.

Belongs to the herpesviridae glycoprotein H family. As to quaternary structure, interacts with glycoprotein L (gL); this interaction is necessary for the correct processing and cell surface expression of gH. The heterodimer gH/gL seems to interact with gB trimers during fusion. The heterodimer gH/gL interacts with host EPHA2 to facilitate virus internalization and fusion. Interacts with glycoprotein 42/BZLF2. In terms of processing, N-glycosylated, O-glycosylated, and sialylated.

The protein localises to the virion membrane. It localises to the host cell membrane. Its subcellular location is the host endosome membrane. In terms of biological role, the heterodimer glycoprotein H-glycoprotein L is required for the fusion of viral and plasma membranes leading to virus entry into the host cell. Following initial binding to host receptor, membrane fusion is mediated by the fusion machinery composed of gB and the heterodimer gH/gL. May also be involved in the fusion between the virion envelope and the outer nuclear membrane during virion morphogenesis. The heterodimer gH/gL targets also host EPHA2 to promote viral entry. This Homo sapiens (Human) protein is Envelope glycoprotein H.